A 427-amino-acid polypeptide reads, in one-letter code: Glutamyl-tRNA reductase (427 aa).

Residues 49 to 52 (TCNR), serine 109, 114 to 116 (EGQ), and glutamine 120 contribute to the substrate site. The Nucleophile role is filled by cysteine 50. Residue 188–193 (GAGKMA) coordinates NADP(+).

The protein belongs to the glutamyl-tRNA reductase family. Homodimer.

The enzyme catalyses (S)-4-amino-5-oxopentanoate + tRNA(Glu) + NADP(+) = L-glutamyl-tRNA(Glu) + NADPH + H(+). Its pathway is porphyrin-containing compound metabolism; protoporphyrin-IX biosynthesis; 5-aminolevulinate from L-glutamyl-tRNA(Glu): step 1/2. It functions in the pathway porphyrin-containing compound metabolism; chlorophyll biosynthesis. With respect to regulation, feedback inhibition by heme. In terms of biological role, catalyzes the NADPH-dependent reduction of glutamyl-tRNA(Glu) to glutamate 1-semialdehyde (GSA). This is Glutamyl-tRNA reductase from Synechocystis sp. (strain ATCC 27184 / PCC 6803 / Kazusa).